A 301-amino-acid chain; its full sequence is Mitochondrial ornithine transporter 1 (301 aa).

A run of 6 helical transmembrane segments spans residues 5–25 (PAIQ…ACVL), 68–88 (SPAL…YGFC), 110–130 (AAAG…TELV), 168–188 (GFYH…FFFF), 207–227 (LGPI…WLAV), and 237–257 (IQVL…LSIV). 3 Solcar repeats span residues 7-91 (IQAA…CQQV), 104-197 (LSDL…SRSF), and 207-293 (LGPI…SRKL).

Belongs to the mitochondrial carrier (TC 2.A.29) family. Expressed in the liver (at protein level).

It localises to the mitochondrion inner membrane. The protein localises to the mitochondrion membrane. The enzyme catalyses L-citrulline(in) + L-ornithine(out) + H(+)(in) = L-citrulline(out) + L-ornithine(in) + H(+)(out). It catalyses the reaction L-ornithine(in) + L-arginine(out) = L-ornithine(out) + L-arginine(in). It carries out the reaction L-ornithine(out) + L-lysine(in) = L-ornithine(in) + L-lysine(out). The catalysed reaction is L-ornithine(out) + H(+)(in) = L-ornithine(in) + H(+)(out). The enzyme catalyses L-lysine(out) + H(+)(in) = L-lysine(in) + H(+)(out). Inhibited by pyridoxal 5'-phosphate as well as by mercurials (mersalyl, p-chloromercuribenzene sulfonate, and mercuric chloride), N-ethylmaleimide and spermine. Its function is as follows. Mitochondrial ornithine-citrulline antiporter. Catalyzes the exchange between cytosolic ornithine and mitochondrial citrulline plus an H(+), the proton compensates the positive charge of ornithine thus leading to an electroneutral transport. Plays a crucial role in the urea cycle, by connecting the cytosolic and the intramitochondrial reactions of the urea cycle. Lysine and arginine are also transported by the antiport mechanism. In addition, catalyzes an electroneutral exchange of ornithine or lysine for H(+), a reaction driven by the pH gradient across the inner membrane. In Rattus norvegicus (Rat), this protein is Mitochondrial ornithine transporter 1 (Slc25a15).